Consider the following 291-residue polypeptide: Homoserine kinase (291 aa).

80-90 contacts ATP; it reads RPASGLGSSAA.

The protein belongs to the GHMP kinase family. Homoserine kinase subfamily.

It is found in the cytoplasm. It catalyses the reaction L-homoserine + ATP = O-phospho-L-homoserine + ADP + H(+). It participates in amino-acid biosynthesis; L-threonine biosynthesis; L-threonine from L-aspartate: step 4/5. Its function is as follows. Catalyzes the ATP-dependent phosphorylation of L-homoserine to L-homoserine phosphate. This Haloarcula marismortui (strain ATCC 43049 / DSM 3752 / JCM 8966 / VKM B-1809) (Halobacterium marismortui) protein is Homoserine kinase.